A 484-amino-acid polypeptide reads, in one-letter code: MDLYGYVACALRLRYGVLDAFLNVYNPDELSAMDDTPFSLYLTRYDCTLETLRLFLKRGVDVNGVRGTRTSPLCTVLSNKELGKEAETLAMCLIDAGADVNARGADGRYPLLCLLENDRINTTSFVKYMIDRGTLVCVRGIDGCGPIQTYLRSKNVVLETLHVLVRAGASIHDMDKKYGFNILQCYMISHVRSSDVRILRFLAGQGVNSSQGFNATFMFDMLERKISYGVFNRKVLDFIFTQISVNQQDSLDFTPINYCVIHNDRRTFDYLLEKGANPNVVNFLGNSCLDLAVLNGNKYMTLRLLRKTITPDAYARALKVINYNIYSINSFGMREFVTRHRTMYKALIRSFIKDSDMEIYTYNHIYDFFKEFVDECIRERDAMKADVLDSVSMFDVIFGRVSRIRWKHVRVISKYVRGAYGDKVKKILRSLYTRRFKTNRLVHYITDLCGTSCLWTHLPVEVRYTIVDYLNDGEIHYLFMKLHA.

7 ANK repeats span residues 33-64 (MDDT…DVNG), 68-102 (TRTS…DVNA), 106-138 (DGRY…LVCV), 142-173 (DGCG…SIHD), 178-211 (YGFN…NSSQ), 251-280 (LDFT…NPNV), and 284-313 (LGNS…TPDA).

The chain is Ankyrin repeat protein T5 from Rabbit fibroma virus (strain Kasza) (RFV).